Reading from the N-terminus, the 217-residue chain is Probable transaldolase (217 aa).

The active-site Schiff-base intermediate with substrate is Lys-83.

It belongs to the transaldolase family. Type 3B subfamily.

The protein resides in the cytoplasm. It carries out the reaction D-sedoheptulose 7-phosphate + D-glyceraldehyde 3-phosphate = D-erythrose 4-phosphate + beta-D-fructose 6-phosphate. It participates in carbohydrate degradation; pentose phosphate pathway; D-glyceraldehyde 3-phosphate and beta-D-fructose 6-phosphate from D-ribose 5-phosphate and D-xylulose 5-phosphate (non-oxidative stage): step 2/3. Functionally, transaldolase is important for the balance of metabolites in the pentose-phosphate pathway. The chain is Probable transaldolase from Brucella melitensis biotype 1 (strain ATCC 23456 / CCUG 17765 / NCTC 10094 / 16M).